The sequence spans 1094 residues: Probable serine/threonine-protein kinase kinX (1094 aa).

The Protein kinase domain maps to Leu22 to Leu281. Residues Ile28 to Val36 and Lys49 each bind ATP. The active-site Proton acceptor is Asp146. Disordered stretches follow at residues Thr301 to Asp884 and Ile946 to Lys1083. A compositionally biased stretch (acidic residues) spans Tyr330–Asp344. Polar residues predominate over residues Ser351 to Gly373. Residues Gln374–Gln387 are compositionally biased toward low complexity. Positions Asp393–Asp408 are enriched in acidic residues. The segment covering Asp410–Glu424 has biased composition (basic and acidic residues). Acidic residues-rich tracts occupy residues Ser433–Gln454, Asp480–Glu496, and Asp503–Glu523. 2 stretches are compositionally biased toward low complexity: residues Ile526–Gln542 and Arg564–Gln585. The segment covering Tyr587 to Asp602 has biased composition (acidic residues). Residues Asp603–Gln639 show a composition bias toward basic and acidic residues. Over residues Gln650–Gln661 the composition is skewed to low complexity. Basic and acidic residues predominate over residues Pro670–Glu801. The tract at residues Val676–Val978 is 40 X 9 AA approximate repeats of V-K-V-E-E-P-V-E-E. Acidic residues predominate over residues Pro802–Val816. Basic and acidic residues-rich tracts occupy residues Glu817–Asp884 and Ile946–Lys971. Low complexity-rich tracts occupy residues Val972–Gln985 and Val992–Pro1011. The segment covering Val1016–Ile1031 has biased composition (polar residues). The span at Lys1032–Lys1050 shows a compositional bias: low complexity.

Belongs to the protein kinase superfamily. TKL Ser/Thr protein kinase family.

The catalysed reaction is L-seryl-[protein] + ATP = O-phospho-L-seryl-[protein] + ADP + H(+). The enzyme catalyses L-threonyl-[protein] + ATP = O-phospho-L-threonyl-[protein] + ADP + H(+). The chain is Probable serine/threonine-protein kinase kinX (kinX) from Dictyostelium discoideum (Social amoeba).